The sequence spans 94 residues: Small ribosomal subunit protein uS19 (94 aa).

The protein belongs to the universal ribosomal protein uS19 family.

Protein S19 forms a complex with S13 that binds strongly to the 16S ribosomal RNA. In Lactobacillus acidophilus (strain ATCC 700396 / NCK56 / N2 / NCFM), this protein is Small ribosomal subunit protein uS19 (rpsS).